Reading from the N-terminus, the 246-residue chain is tRNA pseudouridine synthase A (246 aa).

D52 serves as the catalytic Nucleophile. Y111 contributes to the substrate binding site.

It belongs to the tRNA pseudouridine synthase TruA family. In terms of assembly, homodimer.

The catalysed reaction is uridine(38/39/40) in tRNA = pseudouridine(38/39/40) in tRNA. Functionally, formation of pseudouridine at positions 38, 39 and 40 in the anticodon stem and loop of transfer RNAs. The sequence is that of tRNA pseudouridine synthase A from Parvibaculum lavamentivorans (strain DS-1 / DSM 13023 / NCIMB 13966).